Here is a 510-residue protein sequence, read N- to C-terminus: ATP synthase subunit alpha (510 aa).

An ATP-binding site is contributed by 170-177 (GDRQTGKT).

Belongs to the ATPase alpha/beta chains family. In terms of assembly, F-type ATPases have 2 components, CF(1) - the catalytic core - and CF(0) - the membrane proton channel. CF(1) has five subunits: alpha(3), beta(3), gamma(1), delta(1), epsilon(1). CF(0) has three main subunits: a(1), b(2) and c(9-12). The alpha and beta chains form an alternating ring which encloses part of the gamma chain. CF(1) is attached to CF(0) by a central stalk formed by the gamma and epsilon chains, while a peripheral stalk is formed by the delta and b chains.

The protein localises to the cell inner membrane. The catalysed reaction is ATP + H2O + 4 H(+)(in) = ADP + phosphate + 5 H(+)(out). Produces ATP from ADP in the presence of a proton gradient across the membrane. The alpha chain is a regulatory subunit. The polypeptide is ATP synthase subunit alpha (Maricaulis maris (strain MCS10) (Caulobacter maris)).